A 473-amino-acid chain; its full sequence is ATP synthase subunit beta (473 aa).

An ATP-binding site is contributed by 158-165; the sequence is GGAGVGKT.

Belongs to the ATPase alpha/beta chains family. F-type ATPases have 2 components, CF(1) - the catalytic core - and CF(0) - the membrane proton channel. CF(1) has five subunits: alpha(3), beta(3), gamma(1), delta(1), epsilon(1). CF(0) has three main subunits: a(1), b(2) and c(9-12). The alpha and beta chains form an alternating ring which encloses part of the gamma chain. CF(1) is attached to CF(0) by a central stalk formed by the gamma and epsilon chains, while a peripheral stalk is formed by the delta and b chains.

The protein localises to the cell membrane. The enzyme catalyses ATP + H2O + 4 H(+)(in) = ADP + phosphate + 5 H(+)(out). Functionally, produces ATP from ADP in the presence of a proton gradient across the membrane. The catalytic sites are hosted primarily by the beta subunits. The sequence is that of ATP synthase subunit beta from Priestia megaterium (strain ATCC 12872 / QMB1551) (Bacillus megaterium).